The following is an 87-amino-acid chain: Histone H1.C6/H1.C9 (87 aa).

The segment at 1–87 is disordered; sequence MSDAAVPPKK…KKAVKKAPKK (87 aa). Basic residues predominate over residues 11–87; the sequence is ASPKKASPKK…KKAVKKAPKK (77 aa).

The protein resides in the nucleus. Its subcellular location is the chromosome. This is Histone H1.C6/H1.C9 from Trypanosoma cruzi.